The primary structure comprises 123 residues: Probable non-functional immunoglobulin lambda variable 11-55 (123 aa).

The N-terminal stretch at 1–19 (MALTPLLLLLLSHCTGSLS) is a signal peptide. Residues 20–44 (RPVLTQPPSLSASPGATARLPCTLS) are framework-1. In terms of domain architecture, Ig-like spans 21–123 (PVLTQPPSLS…YCQVYESSAN (103 aa)). Cys-41 and Cys-115 are oxidised to a cystine. Residues 45 to 53 (SDLSVGGKN) are complementarity-determining-1. The framework-2 stretch occupies residues 54–70 (MFWYQQKLGSSPRLFLY). The complementarity-determining-2 stretch occupies residues 71–77 (HYSDSDK). Positions 78 to 115 (QLGPGVPSRVSGSKETSSNTAFLLISGLQPEDEADYYC) are framework-3. A complementarity-determining-3 region spans residues 116–123 (QVYESSAN).

Immunoglobulins are composed of two identical heavy chains and two identical light chains; disulfide-linked.

The protein resides in the secreted. The protein localises to the cell membrane. In terms of biological role, probable non-functional open reading frame (ORF) of V region of the variable domain of immunoglobulin light chains. Non-functional ORF generally cannot participate in the synthesis of a productive immunoglobulin chain due to altered V-(D)-J or switch recombination and/or splicing site (at mRNA level) and/or conserved amino acid change (protein level). Immunoglobulins, also known as antibodies, are membrane-bound or secreted glycoproteins produced by B lymphocytes. In the recognition phase of humoral immunity, the membrane-bound immunoglobulins serve as receptors which, upon binding of a specific antigen, trigger the clonal expansion and differentiation of B lymphocytes into immunoglobulins-secreting plasma cells. Secreted immunoglobulins mediate the effector phase of humoral immunity, which results in the elimination of bound antigens. The antigen binding site is formed by the variable domain of one heavy chain, together with that of its associated light chain. Thus, each immunoglobulin has two antigen binding sites with remarkable affinity for a particular antigen. The variable domains are assembled by a process called V-(D)-J rearrangement and can then be subjected to somatic hypermutations which, after exposure to antigen and selection, allow affinity maturation for a particular antigen. In Homo sapiens (Human), this protein is Probable non-functional immunoglobulin lambda variable 11-55.